We begin with the raw amino-acid sequence, 371 residues long: Cytokine receptor-like factor 2 (371 aa).

Positions 1–22 (MGRLVLLWGAAVFLLGGWMALG) are cleaved as a signal peptide. Residues 23–231 (QGGAAEGVQI…PTPPKPKLSK (209 aa)) are Extracellular-facing. Residues Asn-47 and Asn-55 are each glycosylated (N-linked (GlcNAc...) asparagine). Cysteines 71 and 84 form a disulfide. 2 N-linked (GlcNAc...) asparagine glycosylation sites follow: Asn-101 and Asn-169. One can recognise a Fibronectin type-III domain in the interval 118-211 (KPSSPKHVRF…DWSEVTCWQR (94 aa)). A disulfide bridge links Cys-180 with Cys-218. A WSXWS motif motif is present at residues 200 to 204 (PSDWS). A helical membrane pass occupies residues 232 to 252 (FILISSLAILLMVSLLLLSLW). Residues 253 to 371 (KLWRVKKFLI…VMNDRSYVAL (119 aa)) are Cytoplasmic-facing. The short motif at 261 to 269 (LIPSVPDPK) is the Box 1 motif element. The segment covering 322–336 (ESPRMLDPQTEEKEA) has biased composition (basic and acidic residues). Positions 322 to 347 (ESPRMLDPQTEEKEASGGSLQLPHQP) are disordered.

The protein belongs to the type I cytokine receptor family. Type 5 subfamily. Heterodimer of CRLF2 and IL7R. In terms of tissue distribution, expressed in heart, skeletal muscle, kidney and adult and fetal liver. Primarily expressed in dendrites and monocytes. Weakly expressed in T-cells.

The protein localises to the cell membrane. The protein resides in the secreted. Receptor for thymic stromal lymphopoietin (TSLP). Forms a functional complex with TSLP and IL7R which is capable of stimulating cell proliferation through activation of STAT3 and STAT5. Also activates JAK2. Implicated in the development of the hematopoietic system. The protein is Cytokine receptor-like factor 2 (CRLF2) of Homo sapiens (Human).